We begin with the raw amino-acid sequence, 121 residues long: Large ribosomal subunit protein bL12 (121 aa).

Belongs to the bacterial ribosomal protein bL12 family. In terms of assembly, homodimer. Part of the ribosomal stalk of the 50S ribosomal subunit. Forms a multimeric L10(L12)X complex, where L10 forms an elongated spine to which 2 to 4 L12 dimers bind in a sequential fashion. Binds GTP-bound translation factors.

Its function is as follows. Forms part of the ribosomal stalk which helps the ribosome interact with GTP-bound translation factors. Is thus essential for accurate translation. The chain is Large ribosomal subunit protein bL12 from Pseudomonas savastanoi pv. phaseolicola (strain 1448A / Race 6) (Pseudomonas syringae pv. phaseolicola (strain 1448A / Race 6)).